A 232-amino-acid chain; its full sequence is Uridylate kinase (232 aa).

13 to 14 (GS) contacts ATP. Residue glycine 52 participates in UMP binding. 2 residues coordinate ATP: glycine 53 and arginine 57. UMP contacts are provided by residues aspartate 74 and 122–128 (LQPGQST). ATP is bound by residues threonine 147, tyrosine 153, and aspartate 156.

Belongs to the UMP kinase family. Homohexamer.

It is found in the cytoplasm. The catalysed reaction is UMP + ATP = UDP + ADP. The protein operates within pyrimidine metabolism; CTP biosynthesis via de novo pathway; UDP from UMP (UMPK route): step 1/1. With respect to regulation, inhibited by UTP. Catalyzes the reversible phosphorylation of UMP to UDP. The sequence is that of Uridylate kinase from Thermofilum pendens (strain DSM 2475 / Hrk 5).